Here is a 277-residue protein sequence, read N- to C-terminus: Small ribosomal subunit protein uS2 (277 aa).

The disordered stretch occupies residues 254 to 277; sequence LAGAGSSALNDSGADLSEANPTEA.

Belongs to the universal ribosomal protein uS2 family.

This is Small ribosomal subunit protein uS2 (rpsB) from Mycobacterium leprae (strain TN).